The primary structure comprises 208 residues: CASP-like protein 2A1 (208 aa).

Topologically, residues 1–36 are cytoplasmic; that stretch reads MSKMAEQKAAAVDGLGGAGAADAAPAGEAAAARVRP. Residues 37–57 traverse the membrane as a helical segment; that stretch reads VETLLRAAPLGLCVAAMTVML. The Extracellular segment spans residues 58–78; the sequence is RDQQSNEYGTVAYSDLGGFKY. Residues 79-99 form a helical membrane-spanning segment; it reads LVYANGLCAAYSLVSAFYTAV. Residues 100–108 lie on the Cytoplasmic side of the membrane; that stretch reads PRPATVSRS. Residues 109 to 129 traverse the membrane as a helical segment; the sequence is WVVFLLDQVFTYLILAAGAAA. Residues 130 to 161 lie on the Extracellular side of the membrane; sequence AELLYLAYNGDKEVTWSEACGVFGSFCRQART. A helical transmembrane segment spans residues 162-182; it reads SVAITFGTVLCFILLSLISSY. The Cytoplasmic segment spans residues 183-208; it reads RLFSAYEAPPSSALGSKGVEIAAYPR.

The protein belongs to the Casparian strip membrane proteins (CASP) family. Homodimer and heterodimers.

It is found in the cell membrane. This Sorghum bicolor (Sorghum) protein is CASP-like protein 2A1.